A 301-amino-acid polypeptide reads, in one-letter code: GTPase Era (301 aa).

The region spanning 7-175 is the Era-type G domain; that stretch reads YCGFIAIVGR…AAIVRKHLPE (169 aa). The segment at 15–22 is G1; sequence GRPNVGKS. 15-22 serves as a coordination point for GTP; sequence GRPNVGKS. Positions 41 to 45 are G2; that stretch reads QTTRH. The G3 stretch occupies residues 62–65; the sequence is DTPG. Residues 62–66 and 124–127 contribute to the GTP site; these read DTPGL and NKVD. The segment at 124 to 127 is G4; the sequence is NKVD. The G5 stretch occupies residues 154–156; sequence ISA. Positions 206 to 283 constitute a KH type-2 domain; sequence LGAELPYSVT…HLELWVKVKS (78 aa).

It belongs to the TRAFAC class TrmE-Era-EngA-EngB-Septin-like GTPase superfamily. Era GTPase family. In terms of assembly, monomer.

The protein resides in the cytoplasm. It is found in the cell inner membrane. An essential GTPase that binds both GDP and GTP, with rapid nucleotide exchange. Plays a role in 16S rRNA processing and 30S ribosomal subunit biogenesis and possibly also in cell cycle regulation and energy metabolism. The polypeptide is GTPase Era (Escherichia fergusonii (strain ATCC 35469 / DSM 13698 / CCUG 18766 / IAM 14443 / JCM 21226 / LMG 7866 / NBRC 102419 / NCTC 12128 / CDC 0568-73)).